A 902-amino-acid polypeptide reads, in one-letter code: Glutamate receptor 4 (902 aa).

The first 20 residues, 1–20 (MRIISRQIVLLFSGFWGLAM), serve as a signal peptide directing secretion. Residues 22–544 (AFPSSVQIGG…GVFSFLDPLA (523 aa)) lie on the Extracellular side of the membrane. N-linked (GlcNAc...) asparagine glycans are attached at residues N52, N56, N258, N371, N407, and N414. The cysteines at positions 84 and 331 are disulfide-linked. L-glutamate is bound by residues P500, T502, and R507. Residues 545–565 (YEIWMCIVFAYIGVSVVLFLV) form a helical membrane-spanning segment. The Cytoplasmic portion of the chain corresponds to 566-592 (SRFSPYEWHTEEPEDGKEGPSDQPPNE). Residues 593–608 (FGIFNSLWFSLGAFMQ) constitute an intramembrane region (helical; Pore-forming). Residues 609 to 611 (QGC) lie within the membrane without spanning it. The S-palmitoyl cysteine moiety is linked to residue C611. Residues 612-617 (DISPRS) lie on the Cytoplasmic side of the membrane. A helical membrane pass occupies residues 618–638 (LSGRIVGGVWWFFTLIIISSY). Over 639-813 (TANLAAFLTV…DKTSALSLSN (175 aa)) the chain is Extracellular. 3 residues coordinate L-glutamate: S676, T677, and E727. A disulfide bond links C740 and C795. The chain crosses the membrane as a helical span at residues 814 to 834 (VAGVFYILVGGLGLAMLVALI). Over 835 to 902 (EFCYKSRAEA…GLAVIASDLP (68 aa)) the chain is Cytoplasmic. A lipid anchor (S-palmitoyl cysteine) is attached at C837. Phosphoserine; by PKC/PRKCG is present on S862.

The protein belongs to the glutamate-gated ion channel (TC 1.A.10.1) family. GRIA4 subfamily. Homotetramer or heterotetramer of pore-forming glutamate receptor subunits. Tetramers may be formed by the dimerization of dimers. Interacts with EPB41L1 via its C-terminus. Isoform 3 interacts with PICK1. Found in a complex with GRIA1, GRIA2, GRIA3, CNIH2, CNIH3, CACNG2, CACNG3, CACNG4, CACNG5, CACNG7 and CACNG8. Interacts with CACNG5 and PRKCG. Found in a complex with GRIA1, GRIA2, GRIA3, DLG4, CACNG8 and CNIH2. Palmitoylated. Depalmitoylated upon L-glutamate stimulation. ZDHHC3/GODZ specifically palmitoylates Cys-611, which leads to Golgi retention and decreased cell surface expression. In contrast, Cys-837 palmitoylation does not affect cell surface expression but regulates stimulation-dependent endocytosis. Post-translationally, phosphorylated at Ser-862 by PRKCG; phosphorylation increases plasma membrane-associated GRI4 expression.

It localises to the cell membrane. It is found in the postsynaptic cell membrane. Its subcellular location is the cell projection. The protein resides in the dendrite. It catalyses the reaction Ca(2+)(in) = Ca(2+)(out). The catalysed reaction is Na(+)(in) = Na(+)(out). The enzyme catalyses Mg(2+)(in) = Mg(2+)(out). Functionally, ionotropic glutamate receptor that functions as a ligand-gated cation channel, gated by L-glutamate and glutamatergic agonists such as alpha-amino-3-hydroxy-5-methyl-4-isoxazolepropionic acid (AMPA), quisqualic acid, and kainic acid. L-glutamate acts as an excitatory neurotransmitter at many synapses in the central nervous system and plays an important role in fast excitatory synaptic transmission. Binding of the excitatory neurotransmitter L-glutamate induces a conformation change, leading to the opening of the cation channel, and thereby converts the chemical signal to an electrical impulse upon entry of monovalent and divalent cations such as sodium and calcium. The receptor then desensitizes rapidly and enters a transient inactive state, characterized by the presence of bound agonist. In the presence of CACNG8, shows resensitization which is characterized by a delayed accumulation of current flux upon continued application of L-glutamate. The sequence is that of Glutamate receptor 4 from Macaca fascicularis (Crab-eating macaque).